Reading from the N-terminus, the 416-residue chain is Serine hydroxymethyltransferase (416 aa).

Residues leucine 118 and glycine 122 to leucine 124 contribute to the (6S)-5,6,7,8-tetrahydrofolate site. Lysine 226 bears the N6-(pyridoxal phosphate)lysine mark. (6S)-5,6,7,8-tetrahydrofolate is bound by residues glutamate 242 and serine 350 to phenylalanine 352.

The protein belongs to the SHMT family. In terms of assembly, homodimer. Requires pyridoxal 5'-phosphate as cofactor.

Its subcellular location is the cytoplasm. It carries out the reaction (6R)-5,10-methylene-5,6,7,8-tetrahydrofolate + glycine + H2O = (6S)-5,6,7,8-tetrahydrofolate + L-serine. It functions in the pathway one-carbon metabolism; tetrahydrofolate interconversion. It participates in amino-acid biosynthesis; glycine biosynthesis; glycine from L-serine: step 1/1. In terms of biological role, catalyzes the reversible interconversion of serine and glycine with tetrahydrofolate (THF) serving as the one-carbon carrier. This reaction serves as the major source of one-carbon groups required for the biosynthesis of purines, thymidylate, methionine, and other important biomolecules. Also exhibits THF-independent aldolase activity toward beta-hydroxyamino acids, producing glycine and aldehydes, via a retro-aldol mechanism. The chain is Serine hydroxymethyltransferase from Helicobacter pylori (strain Shi470).